We begin with the raw amino-acid sequence, 351 residues long: DNA polymerase IV (351 aa).

In terms of domain architecture, UmuC spans F4 to G184. Positions 8 and 102 each coordinate Mg(2+). E103 is an active-site residue.

Belongs to the DNA polymerase type-Y family. As to quaternary structure, monomer. Mg(2+) is required as a cofactor.

It localises to the cytoplasm. It catalyses the reaction DNA(n) + a 2'-deoxyribonucleoside 5'-triphosphate = DNA(n+1) + diphosphate. In terms of biological role, poorly processive, error-prone DNA polymerase involved in untargeted mutagenesis. Copies undamaged DNA at stalled replication forks, which arise in vivo from mismatched or misaligned primer ends. These misaligned primers can be extended by PolIV. Exhibits no 3'-5' exonuclease (proofreading) activity. May be involved in translesional synthesis, in conjunction with the beta clamp from PolIII. This chain is DNA polymerase IV, found in Pseudoalteromonas translucida (strain TAC 125).